We begin with the raw amino-acid sequence, 304 residues long: Oxygen-dependent coproporphyrinogen-III oxidase (304 aa).

Substrate is bound at residue Ser-93. A divalent metal cation contacts are provided by His-97 and His-107. The active-site Proton donor is His-107. 109-111 provides a ligand contact to substrate; it reads NVR. A divalent metal cation-binding residues include His-146 and His-176. An important for dimerization region spans residues 241 to 276; the sequence is YVEFNLVYDRGTLFGLQSGGRTESILMSLPPQVRWG. Position 259–261 (259–261) interacts with substrate; that stretch reads GGR.

Belongs to the aerobic coproporphyrinogen-III oxidase family. As to quaternary structure, homodimer. Requires a divalent metal cation as cofactor.

Its subcellular location is the cytoplasm. The catalysed reaction is coproporphyrinogen III + O2 + 2 H(+) = protoporphyrinogen IX + 2 CO2 + 2 H2O. Its pathway is porphyrin-containing compound metabolism; protoporphyrin-IX biosynthesis; protoporphyrinogen-IX from coproporphyrinogen-III (O2 route): step 1/1. Functionally, involved in the heme biosynthesis. Catalyzes the aerobic oxidative decarboxylation of propionate groups of rings A and B of coproporphyrinogen-III to yield the vinyl groups in protoporphyrinogen-IX. This Pseudomonas syringae pv. syringae (strain B728a) protein is Oxygen-dependent coproporphyrinogen-III oxidase.